Consider the following 395-residue polypeptide: Endophilin-B2 (395 aa).

At methionine 1 the chain carries N-acetylmethionine. The tract at residues 1–27 (MDFNMKKLASDAGIFFTRAVQFTEEKF) is membrane-binding amphipathic helix. Position 10 is a phosphoserine (serine 10). One can recognise a BAR domain in the interval 24-287 (EEKFGQAEKT…LGRFPGTFVG (264 aa)). 2 coiled-coil regions span residues 116–132 (IKVA…ERDF) and 206–240 (ASAL…LLLE). The region spanning 335 to 395 (SGTRKARVLY…VPVTYLELLS (61 aa)) is the SH3 domain. Position 395 is a phosphoserine (serine 395).

The protein belongs to the endophilin family. As to quaternary structure, homodimer, and heterodimer with SH3GLB1.

It localises to the cytoplasm. The chain is Endophilin-B2 (SH3GLB2) from Bos taurus (Bovine).